Consider the following 164-residue polypeptide: Protein SprT (164 aa).

The SprT-like domain maps to 14–156 (QQAETFFKRP…LCKRCRETLV (143 aa)). Residue histidine 69 coordinates Zn(2+). Glutamate 70 is a catalytic residue. Histidine 73 is a binding site for Zn(2+).

Belongs to the SprT family. Zn(2+) serves as cofactor.

The protein resides in the cytoplasm. The chain is Protein SprT from Pseudomonas putida (strain W619).